We begin with the raw amino-acid sequence, 442 residues long: MSVKWEKTGKTTGELTFDISKDEIKLGLDQAFKRIKKNLRVPGFRKGHVSRVIFDQYYGEEALYEDALNIVLPNAYAAAVKEAGINAVGQPQIVPVSMDKDKDWTMKATVTVQPEVELGEYKGIEVPKQNTRVYQKDIDAELDKRREQSAELVLKKGKAENGDTVTIDYKGTIDGKEFDGGSAENYSLELGSGTFIPGFEDQLVGHEAGDDVDVVVTFPKDYGAKDLAGKEAHFATKIHEVKSKQLPELDDEFAKDVDDSVDTLDELKEKIKKDLKDQKEQVANDAIQEAAIEGAVKNATIDEIPDAMIQEDVDTQLNQYLGNMQRQGIDPQTYYKLTNTTEDQLRSQFAKNAAERVKTNLVLEAIVAAEDLKATKEEIDKEIKDLAAEYNMDEKVVRNTLSDDMLGHDITVRKAMDLITDNAKQVAKSKLEAKDSDDKESK.

A PPIase FKBP-type domain is found at 162–247 (GDTVTIDYKG…IHEVKSKQLP (86 aa)).

The protein belongs to the FKBP-type PPIase family. Tig subfamily.

The protein localises to the cytoplasm. The catalysed reaction is [protein]-peptidylproline (omega=180) = [protein]-peptidylproline (omega=0). Its function is as follows. Involved in protein export. Acts as a chaperone by maintaining the newly synthesized protein in an open conformation. Functions as a peptidyl-prolyl cis-trans isomerase. This is Trigger factor from Lactobacillus acidophilus (strain ATCC 700396 / NCK56 / N2 / NCFM).